The chain runs to 274 residues: Phosphatidylglycerol--prolipoprotein diacylglyceryl transferase (274 aa).

Transmembrane regions (helical) follow at residues 22–42 (LSVR…MWLA), 61–81 (LLFY…VLFY), 96–116 (IWTG…AMVW), 125–145 (FFTV…VGRI), 177–197 (SQLY…NLFW), 204–224 (GAIS…VEFV), and 238–258 (ISMG…MIWV). An a 1,2-diacyl-sn-glycero-3-phospho-(1'-sn-glycerol)-binding site is contributed by Arg-144.

Belongs to the Lgt family.

It localises to the cell inner membrane. The enzyme catalyses L-cysteinyl-[prolipoprotein] + a 1,2-diacyl-sn-glycero-3-phospho-(1'-sn-glycerol) = an S-1,2-diacyl-sn-glyceryl-L-cysteinyl-[prolipoprotein] + sn-glycerol 1-phosphate + H(+). The protein operates within protein modification; lipoprotein biosynthesis (diacylglyceryl transfer). Its function is as follows. Catalyzes the transfer of the diacylglyceryl group from phosphatidylglycerol to the sulfhydryl group of the N-terminal cysteine of a prolipoprotein, the first step in the formation of mature lipoproteins. This is Phosphatidylglycerol--prolipoprotein diacylglyceryl transferase from Aeromonas hydrophila subsp. hydrophila (strain ATCC 7966 / DSM 30187 / BCRC 13018 / CCUG 14551 / JCM 1027 / KCTC 2358 / NCIMB 9240 / NCTC 8049).